A 327-amino-acid chain; its full sequence is Tryptophan--tRNA ligase (327 aa).

Residues 9–11 (RPT) and 17–18 (GN) each bind ATP. Residues 10–18 (PTGNLHLGN) carry the 'HIGH' region motif. Asp-133 contacts L-tryptophan. ATP contacts are provided by residues 145 to 147 (GKD), Val-186, and 194 to 198 (KMGKS). The short motif at 194 to 198 (KMGKS) is the 'KMSKS' region element.

Belongs to the class-I aminoacyl-tRNA synthetase family. In terms of assembly, homodimer.

It localises to the cytoplasm. It catalyses the reaction tRNA(Trp) + L-tryptophan + ATP = L-tryptophyl-tRNA(Trp) + AMP + diphosphate + H(+). Functionally, catalyzes the attachment of tryptophan to tRNA(Trp). This Porphyromonas gingivalis (strain ATCC BAA-308 / W83) protein is Tryptophan--tRNA ligase.